The following is a 138-amino-acid chain: uncharacterized protein (138 aa).

This is an uncharacterized protein from Acanthamoeba polyphaga (Amoeba).